A 164-amino-acid chain; its full sequence is UPF0304 protein HSM_1818 (164 aa).

The protein belongs to the UPF0304 family.

The chain is UPF0304 protein HSM_1818 from Histophilus somni (strain 2336) (Haemophilus somnus).